A 358-amino-acid polypeptide reads, in one-letter code: HLA class I histocompatibility antigen, alpha chain E (358 aa).

Positions 1 to 21 (MVDGTLLLLLSEALALTQTWA) are cleaved as a signal peptide. The interval 22–111 (GSHSLKYFHT…LRGYYNQSEA (90 aa)) is alpha-1. At 22-305 (GSHSLKYFHT…KPASQPTIPI (284 aa)) the chain is on the extracellular side. Tyrosine 28, glutamate 84, serine 87, asparagine 98, and tyrosine 105 together coordinate a peptide antigen. Asparagine 107 carries an N-linked (GlcNAc...) asparagine glycan. The interval 112-203 (GSHTLQWMHG…EKGKETLLHL (92 aa)) is alpha-2. Cysteine 122 and cysteine 185 form a disulfide bridge. Positions 164, 167, 177, 180, and 192 each coordinate a peptide antigen. Positions 204 to 295 (EPPKTHVTHH…GLPEPVTLRW (92 aa)) are alpha-3. One can recognise an Ig-like C1-type domain in the interval 206-294 (PKTHVTHHPI…EGLPEPVTLR (89 aa)). Cysteine 224 and cysteine 280 are disulfide-bonded. A connecting peptide region spans residues 296–305 (KPASQPTIPI). The helical transmembrane segment at 306–329 (VGIIAGLVLLGSVVSGAVVAAVIW) threads the bilayer. Topologically, residues 330–358 (RKKSSGGKGGSYSKAEWSDSAQGSESHSL) are cytoplasmic. The tract at residues 333-358 (SSGGKGGSYSKAEWSDSAQGSESHSL) is disordered. A compositionally biased stretch (polar residues) spans 348-358 (DSAQGSESHSL). A Phosphoserine modification is found at serine 353.

It belongs to the MHC class I family. Forms a heterotrimer with B2M and a self- or a pathogen-derived peptide (peptide-bound HLA-E-B2M). Similarly to MHC class Ia assembly, HLA-E-B2M heterodimer interacts with components of the antigen processing machinery TAPBP and TAP1-TAP2 complex; this interaction is required for peptide loading and translocation to the cell surface. Interacts with CALCR; this interaction is required for appropriate folding. The optimum binding peptide is a nonamer (VL9) that is primarily derived from amino-acid residues 3-11 of the signal sequences of most HLA-A, -B, -C and -G molecules. The VL9 peptide anchors to five main sites in the peptide-binding groove of HLA-E. Peptide-bound HLA-E-B2M complex interacts with KLRD1-KLRC1 receptor on NK cells. Binds with lower affinity to activating KLRD1-KLRC2. The common subunit KLRC1 plays a prominent role in directly interacting with HLA-E. Peptide-bound HLA-E-B2M interacts with the alpha-beta TCR on unconventional CD8+ T cells. Peptide-free HLA-E interacts with HLA-F-B2M complex; this interaction may regulate the intracellular trafficking and the stability of peptide-free MHC class I open conformers (OCs). In terms of processing, N-glycosylated. The soluble form (sHLA-E) can be partly produced by proteolytic cleavage at the cell surface (shedding) by a matrix metalloproteinase. Alternative splicing is also suggested as a mechanism for generation of sHLA-E, although it remains to be proved. Expressed in secretory endometrial cells during pregnancy (at protein level). The expression in nonlymphoid tissues is restricted to endothelial cells from all types of vessels, including arteries, veins, capillaries, and lymphatics (at protein level). In lymphoid organs, it is mainly expressed in endothelial venules, B and T cells, monocytes, macrophages, NK cells and megakaryocytes (at protein level).

The protein resides in the cell membrane. Its subcellular location is the golgi apparatus membrane. The protein localises to the secreted. Functionally, non-classical major histocompatibility class Ib molecule involved in immune self-nonself discrimination. In complex with B2M/beta-2-microglobulin binds nonamer self-peptides derived from the signal sequence of classical MHC class Ia molecules (VL9 peptides - VMAPRT[V/L][L/V/I/F]L). Peptide-bound HLA-E-B2M heterotrimeric complex primarily functions as a ligand for natural killer (NK) cell inhibitory receptor KLRD1-KLRC1, enabling NK cells to monitor the expression of other MHC class I molecules in healthy cells and to tolerate self. Upon cellular stress, preferentially binds signal sequence-derived peptides from stress-induced chaperones and is no longer recognized by NK cell inhibitory receptor KLRD1-KLRC1, resulting in impaired protection from NK cells. Binds signal sequence-derived peptides from non-classical MHC class Ib HLA-G molecules and acts as a ligand for NK cell activating receptor KLRD1-KLRC2, likely playing a role in the generation and effector functions of adaptive NK cells and in maternal-fetal tolerance during pregnancy. Besides self-peptides, can also bind and present pathogen-derived peptides conformationally similar to VL9 peptides to alpha-beta T cell receptor (TCR) on unconventional CD8-positive cytotoxic T cells, ultimately triggering antimicrobial immune response. Presents HIV gag peptides (immunodominant KAFSPEVIPMF and subdominant KALGPAATL epitopes) predominantly to CD8-positive T cell clones expressing a TRAV17-containing TCR, triggering HLA-E-restricted T cell responses. Presents mycobacterial peptides to HLA-E-restricted CD8-positive T cells eliciting both cytotoxic and immunoregulatory functions. Its function is as follows. (Microbial infection) Viruses like human cytomegalovirus have evolved an escape mechanism whereby virus-induced down-regulation of host MHC class I molecules is coupled to the binding of viral peptides to HLA-E, restoring HLA-E expression and inducing HLA-E-dependent NK cell immune tolerance to infected cells. (Microbial infection) May bind HIV-1 gag/Capsid protein p24-derived peptide (AISPRTLNA) on infected cells and may inhibit NK cell cytotoxicity, a mechanism that allows HIV-1 to escape immune recognition. In terms of biological role, (Microbial infection) Upon SARS-CoV-2 infection, may contribute to functional exhaustion of cytotoxic NK cells and CD8-positive T cells. Binds SARS-CoV-2 S/Spike protein S1-derived peptide (LQPRTFLL) expressed on the surface of lung epithelial cells, inducing NK cell exhaustion and dampening of antiviral immune surveillance. The chain is HLA class I histocompatibility antigen, alpha chain E from Homo sapiens (Human).